The primary structure comprises 434 residues: Serine--tRNA ligase (434 aa).

Thr237–Glu239 contributes to the L-serine binding site. Arg268–Glu270 serves as a coordination point for ATP. Glu291 serves as a coordination point for L-serine. Glu358–Ser361 contacts ATP. An L-serine-binding site is contributed by Ser393.

It belongs to the class-II aminoacyl-tRNA synthetase family. Type-1 seryl-tRNA synthetase subfamily. In terms of assembly, homodimer. The tRNA molecule binds across the dimer.

It is found in the cytoplasm. It carries out the reaction tRNA(Ser) + L-serine + ATP = L-seryl-tRNA(Ser) + AMP + diphosphate + H(+). The catalysed reaction is tRNA(Sec) + L-serine + ATP = L-seryl-tRNA(Sec) + AMP + diphosphate + H(+). Its pathway is aminoacyl-tRNA biosynthesis; selenocysteinyl-tRNA(Sec) biosynthesis; L-seryl-tRNA(Sec) from L-serine and tRNA(Sec): step 1/1. In terms of biological role, catalyzes the attachment of serine to tRNA(Ser). Is also able to aminoacylate tRNA(Sec) with serine, to form the misacylated tRNA L-seryl-tRNA(Sec), which will be further converted into selenocysteinyl-tRNA(Sec). The sequence is that of Serine--tRNA ligase from Rhodopseudomonas palustris (strain ATCC BAA-98 / CGA009).